The primary structure comprises 39 residues: Histone H2A (39 aa).

Residues 1 to 18 (AGRGKQGGKVRAKAKTRS) show a composition bias toward basic residues. Residues 1–24 (AGRGKQGGKVRAKAKTRSSRAGLQ) form a disordered region. Lysine 5 bears the N6-(2-hydroxyisobutyryl)lysine mark. Lysine 5 is modified (N6-acetyllysine). Position 9 is an N6-(2-hydroxyisobutyryl)lysine; alternate (lysine 9). Residue lysine 9 is modified to N6-lactoyllysine; alternate. Lysine 9 is modified (N6-succinyllysine). Residues lysine 13 and lysine 15 each participate in a glycyl lysine isopeptide (Lys-Gly) (interchain with G-Cter in ubiquitin) cross-link. Lysine 36 is subject to N6-(2-hydroxyisobutyryl)lysine; alternate.

The protein belongs to the histone H2A family. As to quaternary structure, the nucleosome is a histone octamer containing two molecules each of H2A, H2B, H3 and H4 assembled in one H3-H4 heterotetramer and two H2A-H2B heterodimers. The octamer wraps approximately 147 bp of DNA. Post-translationally, monoubiquitination of C-terminus gives a specific tag for epigenetic transcriptional repression. Following DNA double-strand breaks (DSBs), it is ubiquitinated through 'Lys-63' linkage of ubiquitin moieties.

The protein localises to the nucleus. The protein resides in the chromosome. In terms of biological role, core component of nucleosome. Nucleosomes wrap and compact DNA into chromatin, limiting DNA accessibility to the cellular machineries which require DNA as a template. Histones thereby play a central role in transcription regulation, DNA repair, DNA replication and chromosomal stability. DNA accessibility is regulated via a complex set of post-translational modifications of histones, also called histone code, and nucleosome remodeling. Buforins are strong antimicrobial activities in vitro against a broad-spectrum of microorganisms including fungi. Buforin II is more potent than buforin I. This chain is Histone H2A, found in Bufo gargarizans (Asian toad).